A 358-amino-acid polypeptide reads, in one-letter code: NADH-quinone oxidoreductase subunit H (358 aa).

The next 8 helical transmembrane spans lie at 29-49, 95-115, 130-150, 176-196, 206-226, 258-280, 297-317, and 334-354; these read LIKI…LTLW, GLFY…WAVI, LLLV…AGWA, FCFL…IVAV, GLGF…VYLI, GFAI…AVVM, GWIW…WIRA, and IFIP…LSPW.

The protein belongs to the complex I subunit 1 family. As to quaternary structure, NDH-1 is composed of 14 different subunits. Subunits NuoA, H, J, K, L, M, N constitute the membrane sector of the complex.

The protein localises to the cell inner membrane. The enzyme catalyses a quinone + NADH + 5 H(+)(in) = a quinol + NAD(+) + 4 H(+)(out). Its function is as follows. NDH-1 shuttles electrons from NADH, via FMN and iron-sulfur (Fe-S) centers, to quinones in the respiratory chain. The immediate electron acceptor for the enzyme in this species is believed to be ubiquinone. Couples the redox reaction to proton translocation (for every two electrons transferred, four hydrogen ions are translocated across the cytoplasmic membrane), and thus conserves the redox energy in a proton gradient. This subunit may bind ubiquinone. In Acidovorax sp. (strain JS42), this protein is NADH-quinone oxidoreductase subunit H.